Reading from the N-terminus, the 345-residue chain is DNA N(6)-methyladenine demethylase ALKBH1A (345 aa).

Substrate-binding positions include tryptophan 179 and 186–188; that span reads FDW. The region spanning 225–345 is the Fe2OG dioxygenase domain; the sequence is RPEGAIVNYF…RININIRQVF (121 aa). 232–234 serves as a coordination point for 2-oxoglutarate; it reads NYF. 3 residues coordinate Fe cation: histidine 243, aspartate 245, and histidine 299. 336-342 contributes to the 2-oxoglutarate binding site; the sequence is RININIR.

This sequence belongs to the alkB family. The cofactor is Fe(2+). In terms of tissue distribution, mostly expressed in siliques, to a lower extent in roots, seedlings and rosette leaves, but barely in cauline leaves, stems and flowers.

It localises to the nucleus. Its subcellular location is the cytoplasm. It carries out the reaction an N(6)-methyl-2'-deoxyadenosine in DNA + 2-oxoglutarate + O2 = a 2'-deoxyadenosine in DNA + formaldehyde + succinate + CO2. In terms of biological role, dioxygenase that catalyzes DNA N(6)-methyladenine (6 mA) demethylation to modulate gene expression and regulate seed germination. The sequence is that of DNA N(6)-methyladenine demethylase ALKBH1A from Arabidopsis thaliana (Mouse-ear cress).